The primary structure comprises 65 residues: Large ribosomal subunit protein uL29 (65 aa).

It belongs to the universal ribosomal protein uL29 family.

In Syntrophus aciditrophicus (strain SB), this protein is Large ribosomal subunit protein uL29.